The following is a 280-amino-acid chain: Golgi to ER traffic protein 2 (280 aa).

At 1–149 (MPSDREKQRI…IAYNLYQQRK (149 aa)) the chain is on the cytoplasmic side. Residues 15 to 59 (RQAKMAKGGASDRLNKILSQGSSVKTSAVSVLDQPQPADHDPEGM) are disordered. The span at 31-43 (ILSQGSSVKTSAV) shows a compositional bias: polar residues. Residues 150–170 (VRHRFLVVRMVSILANFVYHF) form a helical membrane-spanning segment. At 171-197 (LTISDFSFSPSANPFIRSIPPTSSVSS) the chain is on the lumenal side. Residues 198 to 217 (FFQIFVAIEAVLVAAYIAAS) form a helical membrane-spanning segment. The Cytoplasmic segment spans residues 218–257 (RNVPSNNNGLLVKGISMAAMFVPKLQRFQPLIMKIIGCWD). A helical membrane pass occupies residues 258–278 (TVTFVLNDLGLVVLLFGLISF). Residues 279-280 (RR) are Lumenal-facing.

The protein belongs to the GET2 family. Component of the Golgi to ER traffic (GET) complex, which is composed of GET1, GET2 and GET3. Within the complex, GET1 and GET2 form a heterotetramer which is stabilized by phosphatidylinositol binding and which binds to the GET3 homodimer.

It localises to the endoplasmic reticulum membrane. The protein localises to the golgi apparatus membrane. Its function is as follows. Required for the post-translational delivery of tail-anchored (TA) proteins to the endoplasmic reticulum. Together with GET1, acts as a membrane receptor for soluble GET3, which recognizes and selectively binds the transmembrane domain of TA proteins in the cytosol. The GET complex cooperates with the HDEL receptor ERD2 to mediate the ATP-dependent retrieval of resident ER proteins that contain a C-terminal H-D-E-L retention signal from the Golgi to the ER. This is Golgi to ER traffic protein 2 from Meyerozyma guilliermondii (strain ATCC 6260 / CBS 566 / DSM 6381 / JCM 1539 / NBRC 10279 / NRRL Y-324) (Yeast).